The following is a 213-amino-acid chain: Probable RNA 2'-phosphotransferase (213 aa).

The protein belongs to the KptA/TPT1 family.

In terms of biological role, removes the 2'-phosphate from RNA via an intermediate in which the phosphate is ADP-ribosylated by NAD followed by a presumed transesterification to release the RNA and generate ADP-ribose 1''-2''-cyclic phosphate (APPR&gt;P). May function as an ADP-ribosylase. This is Probable RNA 2'-phosphotransferase from Pyrobaculum aerophilum (strain ATCC 51768 / DSM 7523 / JCM 9630 / CIP 104966 / NBRC 100827 / IM2).